Reading from the N-terminus, the 215-residue chain is Cytochrome b6 (215 aa).

Residues 32–52 (IFYCLGGITLTCFLIQFATGF) form a helical membrane-spanning segment. Cys-35 lines the heme c pocket. Heme b contacts are provided by His-86 and His-100. The next 3 membrane-spanning stretches (helical) occupy residues 90-110 (ASMM…TGGF), 116-136 (LTWV…VTGY), and 186-206 (LHTF…FLMI). Heme b is bound by residues His-187 and His-202.

Belongs to the cytochrome b family. PetB subfamily. The 4 large subunits of the cytochrome b6-f complex are cytochrome b6, subunit IV (17 kDa polypeptide, PetD), cytochrome f and the Rieske protein, while the 4 small subunits are PetG, PetL, PetM and PetN. The complex functions as a dimer. Heme b serves as cofactor. Requires heme c as cofactor.

It localises to the cellular thylakoid membrane. In terms of biological role, component of the cytochrome b6-f complex, which mediates electron transfer between photosystem II (PSII) and photosystem I (PSI), cyclic electron flow around PSI, and state transitions. The sequence is that of Cytochrome b6 from Synechococcus elongatus.